The chain runs to 400 residues: Protein phyllopod (400 aa).

The interval 109–127 is interaction with sina; that stretch reads QERTKLRPVAMVRPTVRVQ. Residues 125 to 145 are disordered; it reads RVQPQSQPQLQPQVPINPTPA. Positions 127–138 are enriched in low complexity; the sequence is QPQSQPQLQPQV. The tract at residues 241-320 is interaction with ttk; the sequence is YQRFPQPSVD…TAISEVLPTA (80 aa). Residues 319–362 are a coiled coil; that stretch reads TARYQVTHEENKENQQAQEMELELEEEEEVDGRAELEVVQEAEA. A disordered region spans residues 346 to 382; that stretch reads EEVDGRAELEVVQEAEAPLEPQSHHKQGNSHQNSHQA.

As to quaternary structure, component of some E3 complex at least composed of sina, ebi and phyl, required for the degradation of ttk. In terms of tissue distribution, in embryos, it is ubiquitously present before cellularization. During stages 9-11, it is expressed in neuroblasts and the SOP cells. From stage 12 onward, it decreases, but remains in a subset of PNS cells at stages 12-14. Weakly expressed in wing imaginal disks, in the SOP cells of wing margin bristles, notal macrochaetes, and other sensory organs. In leg disks, it is expressed in the precursors of the femoral chordotonal organs, as well as in external sensory SOP cells. Strongly expressed in the eye-antenna disk, it is specifically expressed in R1, R6 and R7 cells, and not in R3, R3, R4, R5 and R8 cells.

It is found in the nucleus. Functionally, essential adapter component of E3 ubiquitin ligase complexes; involved in R7 photoreceptor cell differentiation, embryonic nervous system, external sensory organ development and specification of particular muscles. E3 ubiquitin ligase complexes mediate ubiquitination and subsequent proteasomal degradation of target proteins. Required for specification of R7 photoreceptor cell fate in the eye by participating in the ubiquitination and subsequent proteasomal degradation of Tramtrack (ttk), a general inhibitor of photoreceptor differentiation. Acts downstream of Notch signaling to specify the fate of the SOP (sensory organ precursor) cells and their progeny, probably via the sina-mediated proteasomal degradation of ttk. Its restricted pattern of expression, upon Notch and Ras signaling pathways, suggests that it acts as a key determinant in E3 complexes to trigger protein proteolysis in appropriate cells. The chain is Protein phyllopod (phyl) from Drosophila melanogaster (Fruit fly).